The following is a 671-amino-acid chain: MKLIVLIFFLLFINLNYCLKIKEQPKVGGIDSEQPTNSFYIENGNFLMNNQGNGGSLNQYQIISGSFHYFRCLPELWVDRLTKMKACGLNTIQTYIPWNVHQPNGFNTELVATNDLIEFLRQAQQIGLNVILRPGPYSCAEWELGGFPYWILEQQPIALRSSDSVFISAVIAYWSRLLPLLEPLLFTNGGPIIMVQVENEYGSYGEDKSYLETLLTLLQKYLGQGDGNGSGVLFHSTDGPSAQMLFGSKLEGVYQTVDFGPMPIEQIQDNFKIQQTFASKPTPPMNSEYYTGWITNWGDASAARTDASVVAQGLDDILSLNASVNMYMFFGGSNAGFMNGANSNSPTTNFEITIQSYDYDSPLSESGDTTEKYFAIKNVIEKYIKPTTNSNSTLPPIPSNSTKVAYGTIQITQATSLFNNLANLVNSNQQQLQTGAPIPMEQLQQSTGFVLYETTMNIAQSSQLSITELHDRATIFINDEAIEDTQTIGQAVFLQRPFNSSIEITYPSNVTDDGNFNLRILLENQGRVNFGPYLNDRKGLLSGGVLSGQQYLGPWNNYPLPLTNKTLSNINNWEQIKDYTLSNTPTFYQATLSLNSTNDIGDTFLSFTGLGKGQLFVNGYNVGRYWNVGPQRTIYISSVLLHQGDNEIILFETLLTQPIFEIQFLNQPYFD.

Residues 1-18 (MKLIVLIFFLLFINLNYC) form the signal peptide. Residue glutamate 200 is the Proton donor of the active site. Asparagine 228 carries N-linked (GlcNAc...) asparagine glycosylation. Residue glutamate 288 is the Nucleophile of the active site. Asparagine 321, asparagine 391, asparagine 400, asparagine 499, asparagine 509, asparagine 564, and asparagine 595 each carry an N-linked (GlcNAc...) asparagine glycan.

Belongs to the glycosyl hydrolase 35 family.

The protein localises to the lysosome. It carries out the reaction Hydrolysis of terminal non-reducing beta-D-galactose residues in beta-D-galactosides.. Cleaves beta-linked terminal galactosyl residues from gangliosides, glycoproteins, and glycosaminoglycans. The polypeptide is Beta-galactosidase 1 (glb1) (Dictyostelium discoideum (Social amoeba)).